The chain runs to 157 residues: Arginine repressor (157 aa).

This sequence belongs to the ArgR family.

The protein localises to the cytoplasm. The protein operates within amino-acid biosynthesis; L-arginine biosynthesis [regulation]. Functionally, regulates arginine biosynthesis genes. The sequence is that of Arginine repressor from Deinococcus deserti (strain DSM 17065 / CIP 109153 / LMG 22923 / VCD115).